A 353-amino-acid chain; its full sequence is Paraneoplastic antigen Ma1 homolog (353 aa).

It belongs to the PNMA family. In terms of tissue distribution, predominantly expressed in testis. Very low levels in the brain, including in the piriform cortex, hippocampus and some subcortical nuclei.

It localises to the nucleus. The protein localises to the nucleolus. In Mus musculus (Mouse), this protein is Paraneoplastic antigen Ma1 homolog (Pnma1).